A 133-amino-acid polypeptide reads, in one-letter code: Interleukin-4 (133 aa).

Residues 1–24 form the signal peptide; the sequence is MGLTSQLIPTLVCLLACTSNFVHG. 3 disulfide bridges follow: C27–C133, C48–C85, and C70–C105. N-linked (GlcNAc...) asparagine glycosylation occurs at N62.

The protein belongs to the IL-4/IL-13 family.

Its subcellular location is the secreted. Functionally, participates in at least several B-cell activation processes as well as of other cell types. It is a costimulator of DNA-synthesis. It induces the expression of class II MHC molecules on resting B-cells. It enhances both secretion and cell surface expression of IgE and IgG1. It also regulates the expression of the low affinity Fc receptor for IgE (CD23) on both lymphocytes and monocytes. Positively regulates IL31RA expression in macrophages. Stimulates autophagy in dendritic cells by interfering with mTORC1 signaling and through the induction of RUFY4. The protein is Interleukin-4 (IL4) of Sus scrofa (Pig).